A 106-amino-acid chain; its full sequence is ATP-dependent Clp protease adapter protein ClpS (106 aa).

It belongs to the ClpS family. In terms of assembly, binds to the N-terminal domain of the chaperone ClpA.

Its function is as follows. Involved in the modulation of the specificity of the ClpAP-mediated ATP-dependent protein degradation. The polypeptide is ATP-dependent Clp protease adapter protein ClpS (Methylococcus capsulatus (strain ATCC 33009 / NCIMB 11132 / Bath)).